Consider the following 837-residue polypeptide: Periplasmic nitrate reductase (837 aa).

The segment at residues 1–32 (MTSPKLDRRQMLKLEAAAIAAAAAGLPVPALA) is a signal peptide (tat-type signal). The 4Fe-4S Mo/W bis-MGD-type domain maps to 44 to 100 (LKWDKAACRFCGTGCSVMVATKENRVVATHGDIKAEVNRGLNCVKGYFLSKIMYGHD). [4Fe-4S] cluster is bound by residues Cys51, Cys54, Cys58, and Cys86. Residues Lys88, Gln155, Asn180, Cys184, 217–224 (WGSNMAEM), 248–252 (STFEH), 267–269 (QTD), Met378, Gln382, Asn488, 514–515 (SD), Lys537, Asp564, and 724–733 (TGRVLEHWHS) contribute to the Mo-bis(molybdopterin guanine dinucleotide) site. Substrate is bound at residue Trp800. Mo-bis(molybdopterin guanine dinucleotide)-binding residues include Asn808 and Lys825.

Belongs to the prokaryotic molybdopterin-containing oxidoreductase family. NasA/NapA/NarB subfamily. As to quaternary structure, component of the periplasmic nitrate reductase NapAB complex composed of NapA and NapB. [4Fe-4S] cluster serves as cofactor. The cofactor is Mo-bis(molybdopterin guanine dinucleotide). Predicted to be exported by the Tat system. The position of the signal peptide cleavage has not been experimentally proven.

It localises to the periplasm. The enzyme catalyses 2 Fe(II)-[cytochrome] + nitrate + 2 H(+) = 2 Fe(III)-[cytochrome] + nitrite + H2O. In terms of biological role, catalytic subunit of the periplasmic nitrate reductase complex NapAB. Receives electrons from NapB and catalyzes the reduction of nitrate to nitrite. In Bradyrhizobium diazoefficiens (strain JCM 10833 / BCRC 13528 / IAM 13628 / NBRC 14792 / USDA 110), this protein is Periplasmic nitrate reductase.